The sequence spans 411 residues: MKMVLSQRQREELNQAIADYLGSNGYGDSLETFRKEADVSTESEKKFGGLLEKKWTSVIRLQKKVMELEAKLTEAEKEVIEGAPTKNKRTPGEWIPRPPEKYSLTGHRASITRVIFHPIFGLMVSASEDATIKIWDFETGEYERSLKGHTDSVQDVAFDSQGKLLASCSADLSIKLWDFQQSYECVKTMHGHDHNVSSVAFVPAGDYVLSASRDRTIKMWEVATGYCVKTYTGHREWVRMVRVHIEGSIFATCSNDHTIRVWLMNSKDCKVELRDHEHTVECIAWAPEAAASAINEAAGADNKKGHHQGPFLASGSRDKTIRIWDVSVGLCLLTLNGHDNWVRGLAFHPGGKYLVSASDDKTIRVWDLRNKRCMKTLYAHQHFCTSIDFHKAHPYVISGSVDQTVKVWECR.

Residues 9-41 (QREELNQAIADYLGSNGYGDSLETFRKEADVST) enclose the LisH domain. A coiled-coil region spans residues 56–83 (TSVIRLQKKVMELEAKLTEAEKEVIEGA). WD repeat units follow at residues 106–147 (GHRA…RSLK), 148–187 (GHTD…ECVK), 191–230 (GHDH…CVKT), 233–272 (GHRE…CKVE), 275–334 (DHEH…CLLT), 337–376 (GHDN…CMKT), and 379–411 (AHQH…WECR).

It belongs to the WD repeat LIS1/nudF family.

Its subcellular location is the cytoplasm. The protein resides in the cytoskeleton. It is found in the microtubule organizing center. It localises to the centrosome. Positively regulates the activity of the minus-end directed microtubule motor protein dynein. May enhance dynein-mediated microtubule sliding by targeting dynein to the microtubule plus end. Required for several dynein- and microtubule-dependent processes. This is Lissencephaly-1 homolog from Drosophila persimilis (Fruit fly).